A 135-amino-acid polypeptide reads, in one-letter code: Large ribosomal subunit protein uL16 (135 aa).

The protein belongs to the universal ribosomal protein uL16 family. Part of the 50S ribosomal subunit.

Functionally, binds 23S rRNA and is also seen to make contacts with the A and possibly P site tRNAs. The polypeptide is Large ribosomal subunit protein uL16 (Desulfatibacillum aliphaticivorans).